The sequence spans 1039 residues: Integrin alpha-4 (1039 aa).

The first 40 residues, Met-1–Ser-40, serve as a signal peptide directing secretion. Residues Tyr-41–Phe-983 are Extracellular-facing. FG-GAP repeat units follow at residues Asn-42 to Thr-107, Ser-117 to Ser-184, Asp-193 to Ala-244, Val-246 to Leu-298, Asn-299 to Met-358, Glu-362 to Ser-419, and Gln-423 to Ser-485. N-linked (GlcNAc...) asparagine glycosylation is found at Asn-86, Asn-105, and Asn-145. A disulfide bridge connects residues Cys-98 and Cys-108. Disulfide bonds link Cys-151–Cys-172 and Cys-190–Cys-205. N-linked (GlcNAc...) asparagine glycosylation is present at Asn-236. The Ca(2+) site is built by Asp-321, Asn-323, Asp-325, Asp-329, Asp-384, Asp-386, Asp-388, Asp-392, Asp-446, Asp-448, Asn-450, Tyr-452, and Asp-454. The N-linked (GlcNAc...) asparagine glycan is linked to Asn-487. 2 cysteine pairs are disulfide-bonded: Cys-493/Cys-502 and Cys-508/Cys-564. N-linked (GlcNAc...) asparagine glycosylation is found at Asn-525 and Asn-545. Positions Lys-613–Ile-623 match the SG1 motif. Cys-629 and Cys-634 are oxidised to a cystine. 3 N-linked (GlcNAc...) asparagine glycosylation sites follow: Asn-633, Asn-652, and Asn-667. An intrachain disulfide couples Cys-705 to Cys-718. N-linked (GlcNAc...) asparagine glycosylation is found at Asn-813 and Asn-828. Cystine bridges form between Cys-859–Cys-897 and Cys-904–Cys-909. A helical transmembrane segment spans residues Thr-984–Trp-1007. Residues Lys-1008 to Asp-1039 lie on the Cytoplasmic side of the membrane. The GFFKR motif motif lies at Gly-1010–Arg-1014. Ser-1028 carries the phosphoserine modification.

Belongs to the integrin alpha chain family. Heterodimer of an alpha and a beta subunit. The alpha subunit can sometimes be cleaved into two non-covalently associated fragments. Alpha-4 associates with either beta-1 or beta-7. Alpha-4 interacts with PXN, LPXN, and TGFB1I1/HIC5. Interacts with CSPG4 through CSPG4 chondroitin sulfate glycosaminoglycan. Interacts with JAML; integrin alpha-4/beta-1 may regulate leukocyte to endothelial cells adhesion by controlling JAML homodimerization. ITGA4:ITGB1 is found in a ternary complex with CX3CR1 and CX3CL1. Interacts with MDK. ITGA4:ITGB1 interacts with MDK; this interaction mediates MDK-induced osteoblast cells migration through PXN phosphorylation. Integrin ITGA4:ITGB1 interacts with SVEP1 (via Sushi domain 21); thereby inhibits Ca(2+) intracellular signaling and as a result represses vasocontraction. ITGA4:ITGB1 interacts with SELP. ITGA4:ITGB1 interacts with BCAM. In terms of processing, phosphorylation on Ser-1028 inhibits PXN binding. As to expression, expressed in the media layer of the arterial wall (at protein level). Weakly expression in the thymus, spleen and mesenteric lymph nodes.

It localises to the membrane. Functionally, integrins alpha-4/beta-1 (VLA-4 or LPAM-2) and alpha-4/beta-7 (LPAM-1) are receptors for fibronectin. They recognize one or more domains within the alternatively spliced CS-1 and CS-5 regions of fibronectin. They are also receptors for VCAM1. Integrin alpha-4/beta-1 recognizes the sequence Q-I-D-S in VCAM1. Integrin alpha-4/beta-7 is also a receptor for MADCAM1. It recognizes the sequence L-D-T in MADCAM1. On activated endothelial cells integrin VLA-4 triggers homotypic aggregation for most VLA-4-positive leukocyte cell lines. It may also participate in cytolytic T-cell interactions with target cells. ITGA4:ITGB1 binds to fractalkine (CX3CL1) and may act as its coreceptor in CX3CR1-dependent fractalkine signaling. ITGA4:ITGB1 binds to PLA2G2A via a site (site 2) which is distinct from the classical ligand-binding site (site 1) and this induces integrin conformational changes and enhanced ligand binding to site 1. Integrin ITGA4:ITGB1 represses PRKCA-mediated L-type voltage-gated channel Ca(2+) influx and ROCK-mediated calcium sensitivity in vascular smooth muscle cells via its interaction with SVEP1, thereby inhibiting vasocontraction. The protein is Integrin alpha-4 (Itga4) of Mus musculus (Mouse).